Consider the following 122-residue polypeptide: Large ribosomal subunit protein bL19c (122 aa).

It belongs to the bacterial ribosomal protein bL19 family.

It localises to the plastid. It is found in the chloroplast. This Rhodomonas salina (Cryptomonas salina) protein is Large ribosomal subunit protein bL19c (rpl19).